Here is a 501-residue protein sequence, read N- to C-terminus: Sugar phosphate exchanger 3 (501 aa).

Residues 20–40 (CTHHHIVVFLLTFFSYSLLHA) form a helical membrane-spanning segment. N-linked (GlcNAc...) asparagine glycosylation occurs at Asn62. Helical transmembrane passes span 87-107 (TLFL…GLFV), 119-139 (WVLS…GTLT), 153-173 (LWVV…AVMG), 183-203 (FVFG…AFLA), and 214-234 (AFLV…CGLL). Asn273 carries an N-linked (GlcNAc...) asparagine glycan. Transmembrane regions (helical) follow at residues 298 to 320 (GVVL…FFWL), 340 to 360 (IWYD…SDVL), 364 to 384 (APVL…YSRS), 393 to 413 (VIMA…SSAI), 435 to 455 (GIVD…VSLI), and 459 to 479 (LGWM…ILFI).

It belongs to the major facilitator superfamily. Organophosphate:Pi antiporter (OPA) (TC 2.A.1.4) family.

Its subcellular location is the endoplasmic reticulum membrane. It is found in the lysosome membrane. Functionally, unlike the other SLC37 members, seems to lack glucose-6-phosphate antiporter activity. The chain is Sugar phosphate exchanger 3 (SLC37A3) from Gallus gallus (Chicken).